Consider the following 393-residue polypeptide: Branched-chain-amino-acid aminotransferase, mitochondrial (393 aa).

Residues 1–27 (MATAALRQIWIPRFLPVPWFLCGSRRY) constitute a mitochondrion transit peptide. Tyr-169 lines the substrate pocket. Position 230 is an N6-(pyridoxal phosphate)lysine (Lys-230). An N6-acetyllysine modification is found at Lys-322.

The protein belongs to the class-IV pyridoxal-phosphate-dependent aminotransferase family. In terms of assembly, homodimer. The cofactor is pyridoxal 5'-phosphate.

The protein localises to the mitochondrion. The enzyme catalyses L-leucine + 2-oxoglutarate = 4-methyl-2-oxopentanoate + L-glutamate. It catalyses the reaction L-isoleucine + 2-oxoglutarate = (S)-3-methyl-2-oxopentanoate + L-glutamate. The catalysed reaction is L-valine + 2-oxoglutarate = 3-methyl-2-oxobutanoate + L-glutamate. Its function is as follows. Catalyzes the first reaction in the catabolism of the essential branched chain amino acids leucine, isoleucine, and valine. May also function as a transporter of branched chain alpha-keto acids. The chain is Branched-chain-amino-acid aminotransferase, mitochondrial (BCAT2) from Bos taurus (Bovine).